The primary structure comprises 474 residues: Uronate isomerase (474 aa).

This sequence belongs to the metallo-dependent hydrolases superfamily. Uronate isomerase family.

It carries out the reaction D-glucuronate = D-fructuronate. The catalysed reaction is aldehydo-D-galacturonate = keto-D-tagaturonate. Its pathway is carbohydrate metabolism; pentose and glucuronate interconversion. This chain is Uronate isomerase, found in Photorhabdus laumondii subsp. laumondii (strain DSM 15139 / CIP 105565 / TT01) (Photorhabdus luminescens subsp. laumondii).